The primary structure comprises 161 residues: Nucleotide-binding protein SAR11_0692 (161 aa).

Belongs to the YajQ family.

Nucleotide-binding protein. The sequence is that of Nucleotide-binding protein SAR11_0692 from Pelagibacter ubique (strain HTCC1062).